The following is a 262-amino-acid chain: 5'-nucleotidase SurE (262 aa).

Residues Asp-8, Asp-9, Ser-39, and Asn-95 each coordinate a divalent metal cation.

Belongs to the SurE nucleotidase family. A divalent metal cation serves as cofactor.

The protein resides in the cytoplasm. The enzyme catalyses a ribonucleoside 5'-phosphate + H2O = a ribonucleoside + phosphate. Functionally, nucleotidase that shows phosphatase activity on nucleoside 5'-monophosphates. The sequence is that of 5'-nucleotidase SurE from Methanothermobacter thermautotrophicus (strain ATCC 29096 / DSM 1053 / JCM 10044 / NBRC 100330 / Delta H) (Methanobacterium thermoautotrophicum).